A 238-amino-acid chain; its full sequence is Lipid transferase CIDEC (238 aa).

The tract at residues 1–35 (MEYAMKSLSLLYPKSLSRHVSVRTSVVTQQLLSEP) is required for liquid-liquid phase separation (LLPS). A CIDE-N domain is found at 41 to 118 (RARPCRVSTA…VLQKGQKWQP (78 aa)).

This sequence belongs to the CIDE family. In terms of assembly, homodimer. Homooligomer; undergoes liquid-liquid phase separation (LLPS) via its N-terminus, facilitating lipid droplet fusion, occurs at the lipid droplet contact sites. Interacts with CIDEA. Interacts with PLIN1. Interacts with NFAT5; this interaction is direct and retains NFAT5 in the cytoplasm. Interacts with CEBPB. Interacts with isoform CLSTN3beta of CLSTN3; inhibiting the lipid transferase activity of CIDEC. In terms of processing, ubiquitinated and targeted to proteasomal degradation, resulting in a short half-life (about 15 minutes in 3T3-L1 cells). Protein stability depends on triaclyglycerol synthesis, fatty acid availability and lipid droplet formation. In terms of tissue distribution, expressed mainly in adipose tissue, small intestine, heart, colon and stomach and, at lower levels, in brain, kidney and liver.

It localises to the lipid droplet. Its subcellular location is the endoplasmic reticulum. The protein resides in the nucleus. It carries out the reaction a triacyl-sn-glycerol(in) = a triacyl-sn-glycerol(out). Functionally, lipid transferase specifically expressed in white adipose tissue, which promotes unilocular lipid droplet formation by mediating lipid droplet fusion. Lipid droplet fusion promotes their enlargement, restricting lipolysis and favoring lipid storage. Localizes on the lipid droplet surface, at focal contact sites between lipid droplets, and mediates atypical lipid droplet fusion by undergoing liquid-liquid phase separation (LLPS) and promoting directional net neutral lipid transfer from the smaller to larger lipid droplets. The transfer direction may be driven by the internal pressure difference between the contacting lipid droplet pair. Its role in neutral lipid transfer and lipid droplet enlargement is activated by the interaction with PLIN1. May also act as a CEBPB coactivator in the white adipose tissue to control the expression of a subset of CEBPB downstream target genes, including SOCS1, SOCS3, TGFB1, TGFBR1, ID2 and XDH. When overexpressed in preadipocytes, induces apoptosis or increases cell susceptibility to apoptosis induced by serum deprivation or TGFB treatment. The chain is Lipid transferase CIDEC from Homo sapiens (Human).